Consider the following 248-residue polypeptide: Probable septum site-determining protein MinC (248 aa).

Residues Gly94–Ile126 are disordered.

Belongs to the MinC family. Interacts with MinD and FtsZ.

Cell division inhibitor that blocks the formation of polar Z ring septums. Rapidly oscillates between the poles of the cell to destabilize FtsZ filaments that have formed before they mature into polar Z rings. Prevents FtsZ polymerization. This chain is Probable septum site-determining protein MinC, found in Brucella suis biovar 1 (strain 1330).